Consider the following 1025-residue polypeptide: Multidrug resistance protein MdtC (1025 aa).

The next 12 membrane-spanning stretches (helical) occupy residues 3–23 (FFALFIYRPVATILLSVAITL), 333–353 (EVEQTLIISVALVILVVFLFL), 360–380 (IIPAVSVPVSLIGTFAAMYLC), 387–407 (LSLMALTIATGFVVDDAIVVL), 431–451 (VGFTVLSMSLSLVAVFLPLLL), 463–483 (FAVTLSVAIGISLLVSLTLTP), 528–548 (LVGVVLLGTIALNIWLYISIP), 853–873 (VILIIAAIATVYIVLGILYES), 875–895 (VHPLTILSTLPSAGVGALLAL), 897–917 (LFNAPFSLIALIGIMLLIGIV), 953–973 (PIMMTTLAALFGALPLVLSGG), and 984–1004 (ITIVGGLVMSQLLTLYTTPVV).

The protein belongs to the resistance-nodulation-cell division (RND) (TC 2.A.6) family. MdtC subfamily. In terms of assembly, part of a tripartite efflux system composed of MdtA, MdtB and MdtC. MdtC forms a heteromultimer with MdtB.

It localises to the cell inner membrane. Its function is as follows. The MdtABC tripartite complex confers resistance against novobiocin and deoxycholate. The polypeptide is Multidrug resistance protein MdtC (Escherichia coli (strain ATCC 8739 / DSM 1576 / NBRC 3972 / NCIMB 8545 / WDCM 00012 / Crooks)).